Consider the following 227-residue polypeptide: tRNA (guanine-N(1)-)-methyltransferase (227 aa).

Residues Gly110 and 129-134 contribute to the S-adenosyl-L-methionine site; that span reads IGDYVL.

The protein belongs to the RNA methyltransferase TrmD family. As to quaternary structure, homodimer.

The protein resides in the cytoplasm. It carries out the reaction guanosine(37) in tRNA + S-adenosyl-L-methionine = N(1)-methylguanosine(37) in tRNA + S-adenosyl-L-homocysteine + H(+). Functionally, specifically methylates guanosine-37 in various tRNAs. The chain is tRNA (guanine-N(1)-)-methyltransferase from Mycoplasmopsis agalactiae (strain NCTC 10123 / CIP 59.7 / PG2) (Mycoplasma agalactiae).